Consider the following 1175-residue polypeptide: Atrophin-1 (1175 aa).

Disordered regions lie at residues 1 to 595, 608 to 752, and 770 to 847; these read MKTR…VTTS, SSPA…ARFN, and VPLE…HRPP. Residues 16-32 carry the Nuclear localization signal motif; it reads RKKEAPGPREELRSRGR. The span at 17–29 shows a compositional bias: basic and acidic residues; it reads KKEAPGPREELRS. Ser-34 carries the phosphoserine modification. Basic and acidic residues predominate over residues 45 to 63; that stretch reads GKAEKSRQTAKKARIEEPS. A phosphoserine mark is found at Ser-77, Ser-79, Ser-101, Ser-103, and Ser-107. Residues 108–128 show a composition bias toward basic and acidic residues; that stretch reads LDGRSINDDGSSDPRDIDQDN. Residues 129–152 are compositionally biased toward polar residues; that stretch reads RSTSPSIYSPGSVENDSDSSSGLS. 2 stretches are compositionally biased toward pro residues: residues 158 to 174 and 208 to 217; these read PYHPPPLFPPSPPPPDS and GPPPGAPPTH. Low complexity-rich tracts occupy residues 240-253 and 262-273; these read GAAASSVGAPSGGK and IPISSSGASGAP. A compositionally biased stretch (pro residues) spans 345–374; the sequence is PPGPEKGPTLAPSPHPLPPASSSAPGPPMR. The span at 378–396 shows a compositional bias: low complexity; it reads SSSSSSAAASSSSSSSSAS. Positions 416–437 are enriched in polar residues; that stretch reads SMSVSNQPPKYTQPSLPSQAVW. Over residues 476–491 the composition is skewed to basic residues; the sequence is THHHHQQQPQQQHHHG. Positions 503-553 are involved in binding BAIAP2; the sequence is HPLESSNSHHAHPYNMSPSLGSLRPYPPGPAHLPPPHGQVSYNQAGPNGPP. Over residues 527 to 539 the composition is skewed to pro residues; the sequence is PYPPGPAHLPPPH. The segment covering 547–584 has biased composition (low complexity); the sequence is AGPNGPPVSSSNSSGSSSQASYSCSHPSSSQGPQGASY. Ser-617 bears the Phosphoserine mark. Lys-626 carries the post-translational modification N6-acetyllysine. Position 638 is a phosphothreonine (Thr-638). A Phosphoserine modification is found at Ser-646. Thr-654 is subject to Phosphothreonine. Composition is skewed to pro residues over residues 693–703 and 722–737; these read LPPPPAAPTTG and PESPVPPARSPSPPPK. Ser-724 is subject to Phosphoserine; by MAPK8. Ser-731 and Ser-733 each carry phosphoserine. The span at 780–824 shows a compositional bias: basic and acidic residues; the sequence is KRADLVEKVRREAEQRAREEKEREREREREKEREREKERELERSV. A required for interaction with FAT1 region spans residues 864–879; sequence DTPALRTLSEYARPHV. At Ser-881 the chain carries Phosphoserine. Residues 913 to 932 are disordered; that stretch reads PAAREREREARERDLRDRLK. The segment covering 914–932 has biased composition (basic and acidic residues); it reads AAREREREARERDLRDRLK. The Nuclear export signal motif lies at 1018–1026; it reads ALGNDPLAR. Position 1100 is an asymmetric dimethylarginine (Arg-1100). Residue Lys-1168 forms a Glycyl lysine isopeptide (Lys-Gly) (interchain with G-Cter in SUMO2) linkage.

Interacts with BAIAP2, WWP1, WWP2, WWP3 and RERE. Interacts (via its N-terminus) with MTG8; the interaction enhances transcriptional repression of MTG8. Interacts with PQBP1. Interacts with NR2E1; the interaction represses the transcriptional activity of NR2E1. Interacts with FAT1 (via a C-terminal domain). Phosphorylated in vitro by MAPK8/JNK1 on Ser-724. Widely expressed. Most abundant in the brain.

Its subcellular location is the cytoplasm. The protein resides in the perinuclear region. It is found in the cell junction. It localises to the nucleus. In terms of biological role, transcriptional corepressor. Corepressor of MTG8 transcriptional repression. Has some intrinsic repression activity which is independent of the number of the poly-Q repeats. Recruits NR2E1 to repress transcription. Promotes vascular smooth cell (VSMC) migration and orientation. The chain is Atrophin-1 (Atn1) from Mus musculus (Mouse).